Reading from the N-terminus, the 286-residue chain is Beta-lactamase SHV-2 (286 aa).

An N-terminal signal peptide occupies residues 1 to 21 (MRYIRLCIISLLATLPLAVHA). The active-site Acyl-ester intermediate is the S66. Cysteines 73 and 119 form a disulfide. The Proton acceptor role is filled by E164. 230-232 (KTG) lines the substrate pocket.

This sequence belongs to the class-A beta-lactamase family.

The catalysed reaction is a beta-lactam + H2O = a substituted beta-amino acid. Its function is as follows. This enzyme hydrolyzes cefotaxime, ceftazidime and other broad spectrum cephalosporins. The polypeptide is Beta-lactamase SHV-2 (bla) (Escherichia coli).